A 188-amino-acid chain; its full sequence is Pyridoxal 5'-phosphate synthase subunit PdxT (188 aa).

47-49 (GES) contributes to the L-glutamine binding site. Cys-79 (nucleophile) is an active-site residue. Residues Arg-105 and 134-135 (IR) contribute to the L-glutamine site. Active-site charge relay system residues include His-170 and Glu-172.

The protein belongs to the glutaminase PdxT/SNO family. As to quaternary structure, in the presence of PdxS, forms a dodecamer of heterodimers. Only shows activity in the heterodimer.

The enzyme catalyses aldehydo-D-ribose 5-phosphate + D-glyceraldehyde 3-phosphate + L-glutamine = pyridoxal 5'-phosphate + L-glutamate + phosphate + 3 H2O + H(+). The catalysed reaction is L-glutamine + H2O = L-glutamate + NH4(+). It participates in cofactor biosynthesis; pyridoxal 5'-phosphate biosynthesis. Catalyzes the hydrolysis of glutamine to glutamate and ammonia as part of the biosynthesis of pyridoxal 5'-phosphate. The resulting ammonia molecule is channeled to the active site of PdxS. This Listeria monocytogenes serovar 1/2a (strain ATCC BAA-679 / EGD-e) protein is Pyridoxal 5'-phosphate synthase subunit PdxT.